We begin with the raw amino-acid sequence, 203 residues long: Probable NADPH:quinone oxidoreductase 2 (203 aa).

This sequence belongs to the SsuE family. As to quaternary structure, homotetramer. Requires FMN as cofactor.

The catalysed reaction is a quinone + NADH + H(+) = a quinol + NAD(+). It catalyses the reaction a quinone + NADPH + H(+) = a quinol + NADP(+). In terms of biological role, the enzyme apparently serves as a quinone reductase in connection with conjugation reactions of hydroquinones involved in detoxification pathways. The polypeptide is Probable NADPH:quinone oxidoreductase 2 (Oryza sativa subsp. japonica (Rice)).